The primary structure comprises 305 residues: Phosphopantetheine adenylyltransferase (305 aa).

This sequence belongs to the eukaryotic CoaD family.

Its subcellular location is the cytoplasm. The protein localises to the nucleus. The enzyme catalyses (R)-4'-phosphopantetheine + ATP + H(+) = 3'-dephospho-CoA + diphosphate. Functionally, reversibly transfers an adenylyl group from ATP to 4'-phosphopantetheine, yielding dephospho-CoA (dPCoA) and pyrophosphate. Plays a role in the physiological regulation of the intracellular CoA concentration. The chain is Phosphopantetheine adenylyltransferase (CAB4) from Saccharomyces cerevisiae (strain ATCC 204508 / S288c) (Baker's yeast).